The primary structure comprises 979 residues: Collagen alpha-2(I) chain (979 aa).

The interval 1–979 is disordered; that stretch reads SGGFDFSFLP…FGYEGDFYRA (979 aa). A 4-hydroxyproline mark is found at proline 10, proline 13, proline 38, and proline 44. Positions 24–70 are enriched in low complexity; that stretch reads LGPGPMGLMGPRGPPGASGAPGPQGFQGPAGEPGEPGQTGPAGARGP. 5-hydroxylysine; alternate is present on lysine 99. Lysine 99 carries O-linked (Gal...) hydroxylysine; alternate glycosylation. Composition is skewed to low complexity over residues 147-176, 222-263, 272-282, and 312-331; these read VGAP…SAGP, PGAN…AGSK, SAGPQGPPGSS, and RAGV…AGVR. Proline 334 and proline 337 each carry 4-hydroxyproline. The segment covering 363–382 has biased composition (low complexity); the sequence is LPGIDGRPGPIGPAGARGEA. Gly residues predominate over residues 427 to 436; that stretch reads GVQGGKGEQG. Residues 483-500 show a composition bias toward low complexity; the sequence is PGESGAVGPSGAIGSRGP. Residues 517-527 show a composition bias toward gly residues; it reads GAPGGSGGLPG. 2 stretches are compositionally biased toward low complexity: residues 550–594 and 601–621; these read VGTT…PRGS and VGPA…QPGA. The segment covering 622-631 has biased composition (basic and acidic residues); that stretch reads KGERGTKGPK. A compositionally biased stretch (low complexity) spans 639-649; it reads PTGPVGSAGPA. Over residues 659 to 668 the composition is skewed to gly residues; sequence GSRGDGGPPG. The span at 669–679 shows a compositional bias: low complexity; sequence ATGFPGAAGRT. A compositionally biased stretch (gly residues) spans 710–724; it reads GPVGRGETGAGGPPG. 2 stretches are compositionally biased toward low complexity: residues 725 to 759 and 767 to 777; these read FTGE…LGLP and LPGVAGAVGEP. The segment covering 778-788 has biased composition (gly residues); that stretch reads GPLGIGPPGAR. A compositionally biased stretch (low complexity) spans 840–855; the sequence is EPGPVGSVGPVGALGP. The segment covering 865-876 has biased composition (basic and acidic residues); the sequence is RGDKGEPGDKGP. A compositionally biased stretch (pro residues) spans 949–961; the sequence is SGPPGPPGPPGPP.

Belongs to the fibrillar collagen family. Trimers of one alpha 2(I) and two alpha 1(I) chains. Interacts (via C-terminus) with TMEM131 (via PapD-L domain); the interaction is direct and is involved in assembly and TRAPPIII ER-to-Golgi transport complex-dependent secretion of collagen. Prolines at the third position of the tripeptide repeating unit (G-X-Y) are hydroxylated in some or all of the chains. As to expression, expressed in bones.

The protein localises to the secreted. It is found in the extracellular space. It localises to the extracellular matrix. Its function is as follows. Type I collagen is a member of group I collagen (fibrillar forming collagen). This chain is Collagen alpha-2(I) chain, found in Bradypus variegatus (Brown-throated three-fingered sloth).